The primary structure comprises 158 residues: Protein hunchback (158 aa).

Positions 18 to 34 (HNHHHHHHHGHHQHQQR) are enriched in basic residues. Disordered regions lie at residues 18-96 (HNHH…TTTA) and 118-158 (LTPP…KYMA). The segment covering 41–50 (ASSPHQSPLP) has biased composition (polar residues). Low complexity predominate over residues 52–65 (LQLEQYLKQQQQQP). Residues 139 to 158 (EPEKEHDLMSNSSEDMKYMA) show a composition bias toward basic and acidic residues.

The protein belongs to the hunchback C2H2-type zinc-finger protein family.

It localises to the nucleus. Gap class segmentation protein that controls development of head structures. In Drosophila mimica (Fruit fly), this protein is Protein hunchback (hb).